A 1202-amino-acid polypeptide reads, in one-letter code: Nucleolar protein 6 (1202 aa).

Residues M1 to K64 are disordered.

Belongs to the NRAP family. In terms of assembly, part of the small subunit (SSU) processome, composed of more than 70 proteins and the RNA chaperone small nucleolar RNA (snoRNA) U3.

The protein localises to the nucleus. The protein resides in the nucleolus. It is found in the chromosome. Part of the small subunit (SSU) processome, first precursor of the small eukaryotic ribosomal subunit. During the assembly of the SSU processome in the nucleolus, many ribosome biogenesis factors, an RNA chaperone and ribosomal proteins associate with the nascent pre-rRNA and work in concert to generate RNA folding, modifications, rearrangements and cleavage as well as targeted degradation of pre-ribosomal RNA by the RNA exosome. This chain is Nucleolar protein 6, found in Drosophila willistoni (Fruit fly).